A 161-amino-acid chain; its full sequence is Phosphopantetheine adenylyltransferase (161 aa).

A substrate-binding site is contributed by Ser-8. Residues Ser-8–Phe-9 and His-16 contribute to the ATP site. Residues Lys-40, Leu-72, and Arg-86 each coordinate substrate. Residues Gly-87–Arg-89, Glu-97, and Phe-122–Ser-128 contribute to the ATP site.

Belongs to the bacterial CoaD family. In terms of assembly, homohexamer. It depends on Mg(2+) as a cofactor.

Its subcellular location is the cytoplasm. It carries out the reaction (R)-4'-phosphopantetheine + ATP + H(+) = 3'-dephospho-CoA + diphosphate. It participates in cofactor biosynthesis; coenzyme A biosynthesis; CoA from (R)-pantothenate: step 4/5. In terms of biological role, reversibly transfers an adenylyl group from ATP to 4'-phosphopantetheine, yielding dephospho-CoA (dPCoA) and pyrophosphate. The sequence is that of Phosphopantetheine adenylyltransferase from Thermotoga neapolitana (strain ATCC 49049 / DSM 4359 / NBRC 107923 / NS-E).